The chain runs to 344 residues: Dihydroorotase (344 aa).

Residues His13 and His15 each coordinate Zn(2+). Residues 15-17 (HLR) and Asn41 each bind substrate. Residues Lys99, His136, and His174 each contribute to the Zn(2+) site. Lys99 is modified (N6-carboxylysine). His136 contacts substrate. Residue Leu219 participates in substrate binding. Asp247 contacts Zn(2+). Asp247 is an active-site residue. 2 residues coordinate substrate: His251 and Ala263.

This sequence belongs to the metallo-dependent hydrolases superfamily. DHOase family. Class II DHOase subfamily. In terms of assembly, homodimer. Requires Zn(2+) as cofactor.

The catalysed reaction is (S)-dihydroorotate + H2O = N-carbamoyl-L-aspartate + H(+). It participates in pyrimidine metabolism; UMP biosynthesis via de novo pathway; (S)-dihydroorotate from bicarbonate: step 3/3. Functionally, catalyzes the reversible cyclization of carbamoyl aspartate to dihydroorotate. The sequence is that of Dihydroorotase from Acinetobacter baylyi (strain ATCC 33305 / BD413 / ADP1).